Consider the following 282-residue polypeptide: Phosphatidylglycerol--prolipoprotein diacylglyceryl transferase (282 aa).

3 helical membrane passes run 18-38 (IQVH…VALA), 56-76 (ILWA…IFQW), and 89-109 (IWDG…VVIL). Arg-137 is a binding site for a 1,2-diacyl-sn-glycero-3-phospho-(1'-sn-glycerol). The helical transmembrane segment at 237–257 (VIRVSQALSVVLFFGSIGLMI) threads the bilayer.

It belongs to the Lgt family.

Its subcellular location is the cell membrane. It catalyses the reaction L-cysteinyl-[prolipoprotein] + a 1,2-diacyl-sn-glycero-3-phospho-(1'-sn-glycerol) = an S-1,2-diacyl-sn-glyceryl-L-cysteinyl-[prolipoprotein] + sn-glycerol 1-phosphate + H(+). Its pathway is protein modification; lipoprotein biosynthesis (diacylglyceryl transfer). Catalyzes the transfer of the diacylglyceryl group from phosphatidylglycerol to the sulfhydryl group of the N-terminal cysteine of a prolipoprotein, the first step in the formation of mature lipoproteins. The chain is Phosphatidylglycerol--prolipoprotein diacylglyceryl transferase from Lactiplantibacillus plantarum (strain ATCC BAA-793 / NCIMB 8826 / WCFS1) (Lactobacillus plantarum).